A 363-amino-acid polypeptide reads, in one-letter code: MTSLQCPPPDRTRRSLSPTGPKFRESCKSCAASKIRCTKEKPQCARCVKRNMVCEYLESKRARRKPGARLKHRESITTNAHHSPTTTTITTSRTTSSSPSASPKTYHPLNYVDILSWTPTPTLPDSATDTQTGLHCNFDDFLAFSHSTSLLGVPEAGELPVHLTTDFRQLEELNRAPEALDEILQCRCSEDGYQLAILSVVILKVLGWYATIIRPLLGVEAHSPGVGEGTTVRTDSLAETQLSSSFYVDSGQQISPKITMGPPLAYGRESEGKTRMAAQLILSQLHRVQRLVNILCHRFKLHSNREQNPAWNSSTASTATEPEGPAYIEHLYPFSSLVFDQIEKDVRGRLRSLSTELLEMLRY.

The segment at 1 to 24 is disordered; that stretch reads MTSLQCPPPDRTRRSLSPTGPKFR. Positions 27 to 54 form a DNA-binding region, zn(2)-C6 fungal-type; the sequence is CKSCAASKIRCTKEKPQCARCVKRNMVC. Positions 63–72 are enriched in basic residues; it reads RRKPGARLKH. The tract at residues 63-104 is disordered; sequence RRKPGARLKHRESITTNAHHSPTTTTITTSRTTSSSPSASPK. Residues 76–102 show a composition bias toward low complexity; sequence ITTNAHHSPTTTTITTSRTTSSSPSAS.

Its subcellular location is the nucleus. Transcriptional regulator; part of the gene cluster that mediates the biosynthesis of the tetrahydroxanthone dimer secalonic acid D. This Aspergillus aculeatus (strain ATCC 16872 / CBS 172.66 / WB 5094) protein is Transcriptional regulator AacuR.